The following is a 496-amino-acid chain: Lysine--tRNA ligase (496 aa).

Residues E407 and E414 each coordinate Mg(2+).

The protein belongs to the class-II aminoacyl-tRNA synthetase family. In terms of assembly, homodimer. Requires Mg(2+) as cofactor.

The protein localises to the cytoplasm. It catalyses the reaction tRNA(Lys) + L-lysine + ATP = L-lysyl-tRNA(Lys) + AMP + diphosphate. The sequence is that of Lysine--tRNA ligase from Staphylococcus haemolyticus (strain JCSC1435).